We begin with the raw amino-acid sequence, 122 residues long: Large ribosomal subunit protein bL12 (122 aa).

This sequence belongs to the bacterial ribosomal protein bL12 family. In terms of assembly, homodimer. Part of the ribosomal stalk of the 50S ribosomal subunit. Forms a multimeric L10(L12)X complex, where L10 forms an elongated spine to which 2 to 4 L12 dimers bind in a sequential fashion. Binds GTP-bound translation factors.

Forms part of the ribosomal stalk which helps the ribosome interact with GTP-bound translation factors. Is thus essential for accurate translation. The chain is Large ribosomal subunit protein bL12 from Aliivibrio fischeri (strain ATCC 700601 / ES114) (Vibrio fischeri).